The sequence spans 827 residues: Leucine--tRNA ligase (827 aa).

Positions 42–52 (PYPSGKLHMGH) match the 'HIGH' region motif. Positions 583–587 (KMSKS) match the 'KMSKS' region motif. Lys586 provides a ligand contact to ATP.

The protein belongs to the class-I aminoacyl-tRNA synthetase family.

The protein localises to the cytoplasm. It carries out the reaction tRNA(Leu) + L-leucine + ATP = L-leucyl-tRNA(Leu) + AMP + diphosphate. In Pelotomaculum thermopropionicum (strain DSM 13744 / JCM 10971 / SI), this protein is Leucine--tRNA ligase.